The sequence spans 514 residues: 3-octaprenyl-4-hydroxybenzoate carboxy-lyase (514 aa).

Asn-177 lines the Mn(2+) pocket. Prenylated FMN contacts are provided by residues 180-182 (IYR), 194-196 (RWL), and 199-200 (RG). Glu-243 serves as a coordination point for Mn(2+). Asp-314 (proton donor) is an active-site residue.

The protein belongs to the UbiD family. In terms of assembly, homohexamer. The cofactor is prenylated FMN. Requires Mn(2+) as cofactor.

Its subcellular location is the cell membrane. The enzyme catalyses a 4-hydroxy-3-(all-trans-polyprenyl)benzoate + H(+) = a 2-(all-trans-polyprenyl)phenol + CO2. The protein operates within cofactor biosynthesis; ubiquinone biosynthesis. Its function is as follows. Catalyzes the decarboxylation of 3-octaprenyl-4-hydroxy benzoate to 2-octaprenylphenol, an intermediate step in ubiquinone biosynthesis. The polypeptide is 3-octaprenyl-4-hydroxybenzoate carboxy-lyase (Bordetella parapertussis (strain 12822 / ATCC BAA-587 / NCTC 13253)).